A 432-amino-acid polypeptide reads, in one-letter code: Enolase (432 aa).

Glutamine 167 is a (2R)-2-phosphoglycerate binding site. The active-site Proton donor is the glutamate 209. Aspartate 246, glutamate 291, and aspartate 318 together coordinate Mg(2+). (2R)-2-phosphoglycerate-binding residues include lysine 343, arginine 372, serine 373, and lysine 394. The active-site Proton acceptor is the lysine 343.

The protein belongs to the enolase family. In terms of assembly, component of the RNA degradosome, a multiprotein complex involved in RNA processing and mRNA degradation. Requires Mg(2+) as cofactor.

It is found in the cytoplasm. Its subcellular location is the secreted. The protein localises to the cell surface. The enzyme catalyses (2R)-2-phosphoglycerate = phosphoenolpyruvate + H2O. The protein operates within carbohydrate degradation; glycolysis; pyruvate from D-glyceraldehyde 3-phosphate: step 4/5. In terms of biological role, catalyzes the reversible conversion of 2-phosphoglycerate (2-PG) into phosphoenolpyruvate (PEP). It is essential for the degradation of carbohydrates via glycolysis. The chain is Enolase from Aliivibrio salmonicida (strain LFI1238) (Vibrio salmonicida (strain LFI1238)).